The primary structure comprises 772 residues: Ion-translocating oxidoreductase complex subunit C (772 aa).

2 consecutive 4Fe-4S ferredoxin-type domains span residues 369–397 and 407–436; these read GEPQ…QQLY and KATT…VQYF. 8 residues coordinate [4Fe-4S] cluster: C377, C380, C383, C387, C416, C419, C422, and C426. A disordered region spans residues 599-748; it reads KARKLEQQQA…EPEEQVDPRK (150 aa).

Belongs to the 4Fe4S bacterial-type ferredoxin family. RnfC subfamily. In terms of assembly, the complex is composed of six subunits: RsxA, RsxB, RsxC, RsxD, RsxE and RsxG. [4Fe-4S] cluster serves as cofactor.

It localises to the cell inner membrane. Functionally, part of a membrane-bound complex that couples electron transfer with translocation of ions across the membrane. Required to maintain the reduced state of SoxR. This is Ion-translocating oxidoreductase complex subunit C from Shigella dysenteriae serotype 1 (strain Sd197).